The sequence spans 566 residues: Oxygen-dependent choline dehydrogenase (566 aa).

Residue 7–36 (DYIICGAGSAGNVLATRLTEDPDVTVLLLE) participates in FAD binding. A disordered region spans residues 180–202 (NGYQQEGFGPMDRTVTPKGRRAS). Residue His474 is the Proton acceptor of the active site.

Belongs to the GMC oxidoreductase family. It depends on FAD as a cofactor.

It carries out the reaction choline + A = betaine aldehyde + AH2. The enzyme catalyses betaine aldehyde + NAD(+) + H2O = glycine betaine + NADH + 2 H(+). Its pathway is amine and polyamine biosynthesis; betaine biosynthesis via choline pathway; betaine aldehyde from choline (cytochrome c reductase route): step 1/1. Its function is as follows. Involved in the biosynthesis of the osmoprotectant glycine betaine. Catalyzes the oxidation of choline to betaine aldehyde and betaine aldehyde to glycine betaine at the same rate. The chain is Oxygen-dependent choline dehydrogenase from Burkholderia lata (strain ATCC 17760 / DSM 23089 / LMG 22485 / NCIMB 9086 / R18194 / 383).